The sequence spans 258 residues: Shikimate dehydrogenase (NADP(+)) (258 aa).

Residues Ser-14–Ser-16 and Thr-61 contribute to the shikimate site. Lys-65 acts as the Proton acceptor in catalysis. Asn-86 and Asp-101 together coordinate shikimate. Residues Gly-125 to Ser-129 and Leu-211 contribute to the NADP(+) site. Position 213 (Tyr-213) interacts with shikimate. An NADP(+)-binding site is contributed by Gly-234.

It belongs to the shikimate dehydrogenase family. As to quaternary structure, homodimer.

It catalyses the reaction shikimate + NADP(+) = 3-dehydroshikimate + NADPH + H(+). It functions in the pathway metabolic intermediate biosynthesis; chorismate biosynthesis; chorismate from D-erythrose 4-phosphate and phosphoenolpyruvate: step 4/7. Its function is as follows. Involved in the biosynthesis of the chorismate, which leads to the biosynthesis of aromatic amino acids. Catalyzes the reversible NADPH linked reduction of 3-dehydroshikimate (DHSA) to yield shikimate (SA). In Clostridium botulinum (strain Loch Maree / Type A3), this protein is Shikimate dehydrogenase (NADP(+)).